A 253-amino-acid polypeptide reads, in one-letter code: LexA repressor (253 aa).

Positions 1-33 (MTSQGRGTRRGGARGNVRAFPENPADAAGLTPR) are disordered. The H-T-H motif DNA-binding region spans 54 to 74 (VREIGEAVGLTSTSSVAHQLK). Active-site for autocatalytic cleavage activity residues include Ser177 and Lys214.

Belongs to the peptidase S24 family. As to quaternary structure, homodimer.

The catalysed reaction is Hydrolysis of Ala-|-Gly bond in repressor LexA.. In terms of biological role, represses a number of genes involved in the response to DNA damage (SOS response), including recA and lexA. In the presence of single-stranded DNA, RecA interacts with LexA causing an autocatalytic cleavage which disrupts the DNA-binding part of LexA, leading to derepression of the SOS regulon and eventually DNA repair. This chain is LexA repressor, found in Frankia alni (strain DSM 45986 / CECT 9034 / ACN14a).